The primary structure comprises 1336 residues: Lysine-specific demethylase 2B (1336 aa).

Residues 1–25 (MAGPQMGGSAEDHPPRKRHAAEKQK) are disordered. Residues 15 to 25 (PRKRHAAEKQK) show a composition bias toward basic residues. A Phosphoserine modification is found at Ser57. Residues 178–346 (FSHTKLEHLV…MQLRIYEIED (169 aa)) form the JmjC domain. Thr239 contacts substrate. Positions 242 and 244 each coordinate Fe cation. Lys259 provides a ligand contact to substrate. His314 contacts Fe cation. Positions 410 to 430 (MEEEACDQQPQEEEEKDEEGE) are enriched in acidic residues. Residues 410 to 465 (MEEEACDQQPQEEEEKDEEGEGRDRAPKPPTDGSTSPTSTPSEDQEALGKKPKAPA) form a disordered region. The segment covering 440–451 (TDGSTSPTSTPS) has biased composition (low complexity). Ser474 and Ser477 each carry phosphoserine. Phosphothreonine is present on Thr493. At Ser497 the chain carries Phosphoserine. The segment at 606–652 (ARRRRTRCRKCEACLRTECGECHFCKDMKKFGGPGRMKQSCIMRQCI) adopts a CXXC-type zinc-finger fold. Positions 613, 616, 619, 624, 627, 630, 646, 651, 662, 665, 688, 691, 696, 699, 719, and 722 each coordinate Zn(2+). The PHD-type zinc-finger motif lies at 659–725 (TAVCLVCGEA…CWECPKCNHA (67 aa)). Disordered stretches follow at residues 727–843 (KTGK…SLSP) and 855–1034 (QLKP…SPPK). Residues 749–799 (KEQKMNRDNKEGQEPAKRRSECEEAPRRRSDEHSKKVPPDGLLRRKSDDVH) show a composition bias toward basic and acidic residues. A compositionally biased stretch (low complexity) spans 819 to 843 (SSLQTSPGSSSHLSPRPPLGSSLSP). Glycyl lysine isopeptide (Lys-Gly) (interchain with G-Cter in SUMO2) cross-links involve residues Lys857 and Lys890. The segment covering 902–911 (PKTRESDHSR) has biased composition (basic and acidic residues). Residues 932–941 (KVKMRRKRRL) are compositionally biased toward basic residues. The span at 942 to 960 (PNKELSRELSKELNHEIQR) shows a compositional bias: basic and acidic residues. Positions 943-971 (NKELSRELSKELNHEIQRTENSLANENQQ) form a coiled coil. Ser951 is modified (phosphoserine). Residues 961-971 (TENSLANENQQ) are compositionally biased toward polar residues. 4 positions are modified to phosphoserine: Ser975, Ser979, Ser1018, and Ser1031. Over residues 1014–1024 (PSLRSPPRVIS) the composition is skewed to low complexity. Positions 1059–1105 (DGAAHVMHREVWMAVFSYLSHQDLCVCMRVCRTWNRWCCDKRLWTRI) constitute an F-box domain. LRR repeat units follow at residues 1093–1120 (NRWCCDKRLWTRIDLNHCKSITPLMLSG), 1133–1154 (WTNISKKQLSWLINRLPGLRDL), 1156–1182 (LSGCSWIAVSALCSSSCPLLRTLDVQW), 1222–1247 (GLDITDASLRLIIRHMPLLSKLHLSY), 1248–1277 (CNHVTDQSINLLTAVGTTTRDSLTEINLSD), 1278–1302 (CNKVTDQCLSFFKRCGNICHIDLRY), and 1303–1336 (CKQVTKEGCEQFIAEMSVSVQFGQVEEKLLQKLS).

Belongs to the JHDM1 histone demethylase family. As to quaternary structure, interacts with SKP1, forming heterodimers. The heterodimeric KDM2B-SKP1 complex interacts with the PCGF1-BCORL1 heterodimeric complex to form a homotetrameric polycomb repression complex 1 (PRC1.1). Directly interacts with CUL1. The SKP1-KDM2B complex interacts with UBB. Fe(2+) serves as cofactor.

It is found in the nucleus. The protein resides in the nucleolus. The protein localises to the chromosome. The enzyme catalyses N(6),N(6)-dimethyl-L-lysyl(36)-[histone H3] + 2 2-oxoglutarate + 2 O2 = L-lysyl(36)-[histone H3] + 2 formaldehyde + 2 succinate + 2 CO2. Histone demethylase activity is inhibited by fumarate. Histone demethylase that demethylates 'Lys-4' and 'Lys-36' of histone H3, thereby playing a central role in histone code. Preferentially demethylates trimethylated H3 'Lys-4' and dimethylated H3 'Lys-36' residue while it has weak or no activity for mono- and tri-methylated H3 'Lys-36'. Preferentially binds the transcribed region of ribosomal RNA and represses the transcription of ribosomal RNA genes which inhibits cell growth and proliferation. May also serve as a substrate-recognition component of the SCF (SKP1-CUL1-F-box protein)-type E3 ubiquitin ligase complex. The sequence is that of Lysine-specific demethylase 2B (KDM2B) from Homo sapiens (Human).